We begin with the raw amino-acid sequence, 365 residues long: Synapse-associated protein 1 (365 aa).

Residues 1 to 65 (MFGGLSSWLG…QPPTEDPQFL (65 aa)) are disordered. The segment covering 52–62 (EQQQQPPTEDP) has biased composition (low complexity). A BSD domain is found at 172 to 224 (VQFNFDFDQMYPVALVMLQEDELLSKMRFALVPKLVKEEVFWRNYFYRISLIK). Residues 237 to 259 (QASGKEEKSSNRDDNLPLTEAVR) form a disordered region. Positions 240 to 251 (GKEEKSSNRDDN) are enriched in basic and acidic residues. The residue at position 262 (T262) is a Phosphothreonine. 3 positions are modified to phosphoserine: S283, S298, and S327. The interval 344–365 (VAESEKRDENWDKEIEKMLQES) is disordered. Basic and acidic residues predominate over residues 346–365 (ESEKRDENWDKEIEKMLQES).

Interacts (via phosphorylated form and BSD domain) with AKT1; this interaction is enhanced in a mTORC2-mediated manner in response to epidermal growth factor (EGF) stimulation and activates AKT1. Post-translationally, phosphorylated. Phosphorylation increases in a mTORC2-mediated manner in response to epidermal growth factor (EGF) stimulation. In terms of tissue distribution, expressed in the liver, kidney, skeletal muscle and in white and brown adipose tissues. Expressed in the cortex, cerebellum, thalamus, hippocampus, braistem, olfactory bulb, spinal cord and striatum of the brain. Expressed in most neuropil regions containing glutamatergic synaptic terminals. Expressed in the CA1, CA2 and CA3 perikarya of the hippocampus. Expressed in neurons and Purkinje cells (at the protein level).

The protein localises to the cytoplasm. The protein resides in the perinuclear region. It localises to the golgi apparatus. It is found in the perikaryon. Its subcellular location is the cell projection. The protein localises to the axon. The protein resides in the dendrite. It localises to the growth cone. It is found in the presynaptic cell membrane. Its subcellular location is the postsynaptic cell membrane. The protein localises to the membrane. In terms of biological role, plays a role in adipocyte differentiation by promoting mTORC2-mediated phosphorylation of AKT1 at 'Ser-473' after growth factor stimulation. The protein is Synapse-associated protein 1 of Mus musculus (Mouse).